Consider the following 207-residue polypeptide: Holliday junction branch migration complex subunit RuvA (207 aa).

Positions 1–65 are domain I; it reads MIGRIRGVIL…EDAQLLYGFN (65 aa). The segment at 66–143 is domain II; that stretch reads QKQERALFRE…KGLNGDLFEQ (78 aa). The segment at 144-158 is flexible linker; the sequence is NGDIELPASASSKAP. Residues 159–207 are domain III; it reads SAADIEAEASAALIALGYKPQEAAKMISRVATAGADSETLIKEALRAAI.

Belongs to the RuvA family. As to quaternary structure, homotetramer. Forms an RuvA(8)-RuvB(12)-Holliday junction (HJ) complex. HJ DNA is sandwiched between 2 RuvA tetramers; dsDNA enters through RuvA and exits via RuvB. An RuvB hexamer assembles on each DNA strand where it exits the tetramer. Each RuvB hexamer is contacted by two RuvA subunits (via domain III) on 2 adjacent RuvB subunits; this complex drives branch migration. In the full resolvosome a probable DNA-RuvA(4)-RuvB(12)-RuvC(2) complex forms which resolves the HJ.

Its subcellular location is the cytoplasm. Functionally, the RuvA-RuvB-RuvC complex processes Holliday junction (HJ) DNA during genetic recombination and DNA repair, while the RuvA-RuvB complex plays an important role in the rescue of blocked DNA replication forks via replication fork reversal (RFR). RuvA specifically binds to HJ cruciform DNA, conferring on it an open structure. The RuvB hexamer acts as an ATP-dependent pump, pulling dsDNA into and through the RuvAB complex. HJ branch migration allows RuvC to scan DNA until it finds its consensus sequence, where it cleaves and resolves the cruciform DNA. This chain is Holliday junction branch migration complex subunit RuvA, found in Proteus mirabilis (strain HI4320).